The primary structure comprises 492 residues: MNLKLFNPLILTSLTPLIGVFILLLIPSAKEKLCRNFALWISCLTFLFSLLLWIQFNSGTSFFQFSTTFLWFPFFNLYYTIGIDGISLFFILLTTLLIISCILVSWSSIQTNLKDYLICFLILEFLLIQVFSVLDLLLFYIYFESVLIPMFLIVGVWGSRQRKIRAAYQFFLYTLIGSLLMLLALLNIYFQTGTTDLQILWYIQFSEISQIFLWLSFFASFAVKIPMIPFHIWLPEAHAEAPTAGSVILAGILLKMGGYGFLRFSLPMFPVASIFFTPFIFTLSLVAIIYASLTTLRQIDLKKIIAYSSVSHMGFVTIGIFSLNIQGIEGSILLMLSHGLVSSALFLCIGVLYDRYKTRVIKYYSGLIQVMPLFGVFFLFFTFANLGFPGTSSFIGEVLVLLSSFQINKTLTLFASLGMIFGAAYSIWLFNRIIFGSLKLGYFSSFQDISRREFWILIPLAILILWMGIYPNSFLNEIHFSSVNLLELISHT.

The next 15 helical transmembrane spans lie at 9 to 29 (LILT…IPSA), 36 to 56 (NFAL…WIQF), 63 to 83 (FQFS…TIGI), 86 to 106 (ISLF…LVSW), 115 to 135 (DYLI…SVLD), 136 to 156 (LLLF…IVGV), 170 to 190 (FFLY…NIYF), 211 to 231 (IFLW…IPFH), 242 to 262 (PTAG…YGFL), 269 to 289 (FPVA…VAII), 304 to 324 (IIAY…FSLN), 332 to 352 (ILLM…IGVL), 370 to 390 (VMPL…GFPG), 410 to 430 (TLTL…IWLF), and 454 to 474 (FWIL…PNSF).

This sequence belongs to the complex I subunit 4 family.

It is found in the mitochondrion membrane. The catalysed reaction is a ubiquinone + NADH + 5 H(+)(in) = a ubiquinol + NAD(+) + 4 H(+)(out). Core subunit of the mitochondrial membrane respiratory chain NADH dehydrogenase (Complex I) that is believed to belong to the minimal assembly required for catalysis. Complex I functions in the transfer of electrons from NADH to the respiratory chain. The immediate electron acceptor for the enzyme is believed to be ubiquinone. The protein is NADH-ubiquinone oxidoreductase chain 4 (ND4) of Chondrus crispus (Carrageen Irish moss).